Here is a 216-residue protein sequence, read N- to C-terminus: Peptide methionine sulfoxide reductase MsrA (216 aa).

Residue C58 is part of the active site.

The protein belongs to the MsrA Met sulfoxide reductase family.

The enzyme catalyses L-methionyl-[protein] + [thioredoxin]-disulfide + H2O = L-methionyl-(S)-S-oxide-[protein] + [thioredoxin]-dithiol. The catalysed reaction is [thioredoxin]-disulfide + L-methionine + H2O = L-methionine (S)-S-oxide + [thioredoxin]-dithiol. In terms of biological role, has an important function as a repair enzyme for proteins that have been inactivated by oxidation. Catalyzes the reversible oxidation-reduction of methionine sulfoxide in proteins to methionine. The protein is Peptide methionine sulfoxide reductase MsrA of Azotobacter vinelandii (strain DJ / ATCC BAA-1303).